The chain runs to 384 residues: S-adenosylmethionine synthase (384 aa).

ATP is bound at residue His-15. Residue Asp-17 coordinates Mg(2+). Glu-43 contributes to the K(+) binding site. The L-methionine site is built by Glu-56 and Gln-99. Positions 99 to 109 are flexible loop; that stretch reads QSPDINQGVDR. Residues 164-166, 230-231, Asp-239, 245-246, Ala-262, and Lys-266 contribute to the ATP site; these read DAK, RF, and RK. Asp-239 contacts L-methionine. An L-methionine-binding site is contributed by Lys-270.

This sequence belongs to the AdoMet synthase family. Homotetramer; dimer of dimers. It depends on Mg(2+) as a cofactor. K(+) is required as a cofactor.

It localises to the cytoplasm. The enzyme catalyses L-methionine + ATP + H2O = S-adenosyl-L-methionine + phosphate + diphosphate. It functions in the pathway amino-acid biosynthesis; S-adenosyl-L-methionine biosynthesis; S-adenosyl-L-methionine from L-methionine: step 1/1. Catalyzes the formation of S-adenosylmethionine (AdoMet) from methionine and ATP. The overall synthetic reaction is composed of two sequential steps, AdoMet formation and the subsequent tripolyphosphate hydrolysis which occurs prior to release of AdoMet from the enzyme. In Salmonella choleraesuis (strain SC-B67), this protein is S-adenosylmethionine synthase.